The chain runs to 270 residues: Undecaprenyl-diphosphatase 3 (270 aa).

7 helical membrane passes run 5–25 (YYIL…PIPI), 42–62 (IEGF…VLLI), 89–109 (FFFI…GVLF), 117–137 (LKGV…LWII), 192–212 (FSFL…ITDI), 220–240 (TLFV…YISL), and 250–270 (GNLK…LIFL).

It belongs to the UppP family.

It localises to the cell membrane. The enzyme catalyses di-trans,octa-cis-undecaprenyl diphosphate + H2O = di-trans,octa-cis-undecaprenyl phosphate + phosphate + H(+). Catalyzes the dephosphorylation of undecaprenyl diphosphate (UPP). Confers resistance to bacitracin. In Bacillus anthracis, this protein is Undecaprenyl-diphosphatase 3.